Consider the following 204-residue polypeptide: ATP phosphoribosyltransferase (204 aa).

This sequence belongs to the ATP phosphoribosyltransferase family. Short subfamily. Heteromultimer composed of HisG and HisZ subunits.

It localises to the cytoplasm. The catalysed reaction is 1-(5-phospho-beta-D-ribosyl)-ATP + diphosphate = 5-phospho-alpha-D-ribose 1-diphosphate + ATP. Its pathway is amino-acid biosynthesis; L-histidine biosynthesis; L-histidine from 5-phospho-alpha-D-ribose 1-diphosphate: step 1/9. Catalyzes the condensation of ATP and 5-phosphoribose 1-diphosphate to form N'-(5'-phosphoribosyl)-ATP (PR-ATP). Has a crucial role in the pathway because the rate of histidine biosynthesis seems to be controlled primarily by regulation of HisG enzymatic activity. In Staphylococcus aureus (strain USA300), this protein is ATP phosphoribosyltransferase.